A 1055-amino-acid chain; its full sequence is Cellulose synthase A catalytic subunit 9 [UDP-forming] (1055 aa).

Over 1-268 (MEASAGLVAG…ASSKVNPYRM (268 aa)) the chain is Cytoplasmic. Zn(2+)-binding residues include C37, C40, C56, C59, C64, C67, C79, and C82. The RING-type; degenerate zinc finger occupies 37 to 83 (CEICGDEVGRTVDGDLFVACNECGFPVCRPCYEYERREGTQNCPQCK). The helical transmembrane segment at 269-289 (VIILRLVVLGFFLRYRILHPV) threads the bilayer. Residues 290–291 (PD) lie on the Extracellular side of the membrane. The chain crosses the membrane as a helical span at residues 292 to 312 (AIPLWLTSIICEIWFAVSWIL). Topologically, residues 313-831 (DQFPKWYPID…LERFSYINTT (519 aa)) are cytoplasmic. UDP-alpha-D-glucose-binding residues include S351, K357, E358, and D387. D387 is a catalytic residue. A coiled-coil region spans residues 439 to 468 (NFVQERRAMKREYEEFKVRINALVAKAQKV). K528 contributes to the UDP-alpha-D-glucose binding site. Residues K529 and D553 each coordinate Mn(2+). The active site involves D753. Residues 832 to 852 (IYPFTSLPLLAYCTLPAVCLL) form a helical membrane-spanning segment. The Extracellular segment spans residues 853–860 (TGKFIMPP). The helical transmembrane segment at 861–881 (ISTFASLFFIALFISIFATGI) threads the bilayer. Topologically, residues 882–899 (LEMRWSGVSIEEWWRNEQ) are cytoplasmic. A helical membrane pass occupies residues 900-920 (FWVIGGVSAHLFAVVQGLLKV). Residues 921 to 951 (LAGIDTNFTVTSKATGDEDDEFAELYAFKWT) are Extracellular-facing. A glycan (N-linked (GlcNAc...) asparagine) is linked at N927. Residues 952-972 (TLLIPPTTLLILNIIGVVAGV) traverse the membrane as a helical segment. The Cytoplasmic portion of the chain corresponds to 973–983 (SDAINNGSEAW). A helical transmembrane segment spans residues 984 to 1004 (GPLFGKLFFAFWVIVHLYPFL). The Extracellular segment spans residues 1005 to 1013 (KGLMGRQNR). A helical membrane pass occupies residues 1014–1034 (TPTIVVIWSVLLASIFSLLWV). The Cytoplasmic segment spans residues 1035 to 1055 (RIDPFTIKARGPDVRQCGINC).

The protein belongs to the glycosyltransferase 2 family. Plant cellulose synthase subfamily. Mn(2+) serves as cofactor. Requires Zn(2+) as cofactor.

The protein localises to the cell membrane. The enzyme catalyses [(1-&gt;4)-beta-D-glucosyl](n) + UDP-alpha-D-glucose = [(1-&gt;4)-beta-D-glucosyl](n+1) + UDP + H(+). It functions in the pathway glycan metabolism; plant cellulose biosynthesis. In terms of biological role, catalytic subunit of cellulose synthase terminal complexes ('rosettes'), required for beta-1,4-glucan microfibril crystallization, a major mechanism of the cell wall formation. Involved in the secondary cell wall formation. In Oryza sativa subsp. indica (Rice), this protein is Cellulose synthase A catalytic subunit 9 [UDP-forming] (CESA9).